Consider the following 340-residue polypeptide: Trimethylamine N-oxide transport system ATP-binding protein TmoW (340 aa).

An ABC transporter domain is found at 32-268 (GRSFDDIRAD…PTTGYVAKFT (237 aa)). 64 to 71 (GLSGSGKS) contributes to the ATP binding site.

This sequence belongs to the ABC transporter superfamily. In terms of assembly, the complex is probably composed of two ATP-binding proteins (TmoW), two transmembrane proteins (TmoV) and a solute-binding protein (TmoX).

The protein resides in the cell inner membrane. The catalysed reaction is a quaternary ammonium(out) + ATP + H2O = a quaternary ammonium(in) + ADP + phosphate + H(+). In terms of biological role, part of the ABC transporter complex TmoXWV involved in trimethylamine N-oxide (TMAO) import. Responsible for energy coupling to the transport system. Is specific for TMAO and essential for TMAO metabolism. The protein is Trimethylamine N-oxide transport system ATP-binding protein TmoW of Ruegeria pomeroyi (strain ATCC 700808 / DSM 15171 / DSS-3) (Silicibacter pomeroyi).